Here is a 167-residue protein sequence, read N- to C-terminus: Cell number regulator 3 (167 aa).

The helical transmembrane segment at 67–84 threads the bilayer; sequence GMTSCGTSAALFALIQWL.

The protein belongs to the cornifelin family. As to expression, expressed only in pollen.

Its subcellular location is the membrane. In Zea mays (Maize), this protein is Cell number regulator 3 (CNR3).